Reading from the N-terminus, the 284-residue chain is Phosphatidylglycerol--prolipoprotein diacylglyceryl transferase (284 aa).

Helical transmembrane passes span 14 to 34, 62 to 82, 106 to 126, 136 to 156, 190 to 210, 218 to 238, and 252 to 272; these read IAFSLGSIEVHWYGLAYACAI, YFLWAELGIVLGARIGYILIY, FVGIRGMSYHGGLVGFLIASY, LLIYLDLIAISLPLGYVFGRI, PSQLIEAFLEGVIVFLMVMWA, GLLIVVYGLGYSLMRFIAEFY, and LSMGQILSLFMVIVSLGILLY. Arginine 155 is an a 1,2-diacyl-sn-glycero-3-phospho-(1'-sn-glycerol) binding site.

It belongs to the Lgt family.

It localises to the cell inner membrane. The catalysed reaction is L-cysteinyl-[prolipoprotein] + a 1,2-diacyl-sn-glycero-3-phospho-(1'-sn-glycerol) = an S-1,2-diacyl-sn-glyceryl-L-cysteinyl-[prolipoprotein] + sn-glycerol 1-phosphate + H(+). Its pathway is protein modification; lipoprotein biosynthesis (diacylglyceryl transfer). Functionally, catalyzes the transfer of the diacylglyceryl group from phosphatidylglycerol to the sulfhydryl group of the N-terminal cysteine of a prolipoprotein, the first step in the formation of mature lipoproteins. In Helicobacter pylori (strain ATCC 700392 / 26695) (Campylobacter pylori), this protein is Phosphatidylglycerol--prolipoprotein diacylglyceryl transferase.